Here is a 69-residue protein sequence, read N- to C-terminus: Beta-defensin 43 (69 aa).

A signal peptide spans 1-22; that stretch reads MRVLFSILGVLTLLSIVPLARS. Cystine bridges form between C29–C56 and C35–C49.

This sequence belongs to the beta-defensin family.

The protein resides in the secreted. Its function is as follows. Has bactericidal activity. In Mus musculus (Mouse), this protein is Beta-defensin 43 (Defb43).